Reading from the N-terminus, the 544-residue chain is Homeobox protein B-H1 (544 aa).

Residues 53–70 (STTTMSSGGSTTTASGIG) show a composition bias toward low complexity. Disordered stretches follow at residues 53–73 (STTTMSSGGSTTTASGIGKPN), 92–179 (YKQQ…PPTA), 236–308 (GGVG…AFTD), and 471–544 (AANP…QIQV). Residues 95 to 105 (QQHHQQLHHHN) show a composition bias toward basic residues. A compositionally biased stretch (low complexity) spans 106 to 131 (NNNNSGSSGGSSPAHSNNNNNINGDN). The span at 156–172 (THPHTHPHALMHPHGKL) shows a compositional bias: basic residues. Residues 247-262 (DLDDSSDYHEENEDCD) show a composition bias toward acidic residues. The segment covering 266-282 (MDDHSVCSNGGKDDDGN) has biased composition (basic and acidic residues). Polar residues predominate over residues 283–293 (SVKSGSTSDMS). The segment at residues 299 to 358 (QRKARTAFTDHQLQTLEKSFERQKYLSVQERQELAHKLDLSDCQVKTWYQNRRTKWKRQT) is a DNA-binding region (homeobox). The segment covering 476-485 (GPHPVAPPPS) has biased composition (pro residues). Residues 492–506 (PSGLVKPIPAHSASA) are compositionally biased toward low complexity. Residues 507 to 516 (SPPPRPPSTP) are compositionally biased toward pro residues.

The protein belongs to the Antp homeobox family. B-H1 and B-H2 are abundant in the eye-antenna imaginal disk. Expressed in R1 and R6 cells throughout larval stage until 30 hours after puparium formation, at which time expression is seen in the anterior and posterior primary pigment cells. Coexpressed in embryonic glial cells, neurons of the CNS and PNS, most latitudinal anterior cells of the developing notum and the central circular region of the leg and antennal imaginal disk throughout larval development.

It is found in the nucleus. In terms of biological role, B-H1 and B-H2 are regulated by members of the wg signaling pathway; wg and dpp. B-H1 and B-H2 are coexpressed and functionally required in R1 and R6 receptor cells and primary pigment cells for normal eye development. Coexpression is also required for the fate determination of external sensory organs, formation of notal microchaetae, formation of presutural macrochaetae, antennal development and for distal leg morphogenesis; segmentation and specification of tarsal segments 3-5. The polypeptide is Homeobox protein B-H1 (B-H1) (Drosophila melanogaster (Fruit fly)).